Consider the following 1286-residue polypeptide: CLIP-associating protein 2 (1286 aa).

Residues Met1 to Thr40 are golgi localization. 2 positions are modified to phosphoserine: Ser14 and Ser20. The segment at Asp17–Gly67 is disordered. The span at Ser53 to Gly67 shows a compositional bias: gly residues. The segment at Gly66 to Ser317 is TOG 1. 3 HEAT repeats span residues His179–Thr214, His215–Thr251, and Arg256–Gly293. Residues Val320–Ser374 are disordered. A phosphoserine mark is found at Ser322, Ser333, and Ser336. Residues Ser322–Pro340 are compositionally biased toward low complexity. Residues Phe341–Thr352 are compositionally biased toward polar residues. Phosphoserine occurs at positions 374, 376, and 413. The segment at Tyr411–Val473 is disordered. Positions Thr417–Val431 are enriched in basic and acidic residues. The interval Arg450–Ser565 is interaction with microtubules, MAPRE1 and MAPRE3. A compositionally biased stretch (low complexity) spans Ser459–Val473. Phosphoserine is present on residues Ser461, Ser465, Ser469, Ser484, and Ser495. The interval Ser493–Ser564 is disordered. The SXIP motif 1; mediates interaction with MAPRE1 and targeting to microtubule plus ends signature appears at Ser500 to Pro503. Position 513 is a phosphoserine (Ser513). The SXIP motif 2; mediates interaction with MAPRE1 and targeting to microtubule plus ends signature appears at Ser523–Pro526. Ser531, Ser535, Ser570, Ser572, Ser581, Ser614, and Ser620 each carry phosphoserine. The segment covering Arg605–Asp616 has biased composition (basic and acidic residues). The tract at residues Arg605–Ile638 is disordered. The span at Ser620–Arg634 shows a compositional bias: low complexity. The interval Met642 to Asn873 is TOG 2. 2 HEAT repeats span residues Lys702–Ala739 and Leu764–Pro801. At Thr779 the chain carries Phosphothreonine. The interval Thr864–Ser1286 is interaction with RSN and localization to the Golgi and kinetochores. Disordered regions lie at residues His870–Asp920 and Ser944–Ala989. 2 stretches are compositionally biased toward polar residues: residues Arg872 to Ser884 and Ser893 to Pro914. At Ser884 the chain carries Phosphoserine. Phosphoserine occurs at positions 944, 947, 1005, and 1021. A compositionally biased stretch (basic and acidic residues) spans Ser947–Gly964. The required for cortical localization stretch occupies residues Arg1009–Ser1286. HEAT repeat units follow at residues Leu1046–Glu1083, Glu1090–Ala1127, and Met1208–Asp1245.

This sequence belongs to the CLASP family. Interacts with microtubules. Interacts with MAPRE1; probably required for targeting to growing microtubule plus ends. Interacts with ERC1, MAPRE3 and PHLDB2. The interaction with ERC1 may be mediated by PHLDB2. Interacts with GCC2; recruits CLASP2 to Golgi membranes. Interacts with CLIP2 and RSN. Interacts with MACF1. Interacts with mtcl2. Interacts with MTCL1. Phosphorylated by GSK3B. Phosphorylation by GSK3B may negatively regulate binding to microtubule lattices in lamella. Isoform 2 is phosphorylated on Ser-241. As to expression, highly expressed in brain and at low levels in heart, kidney and lung.

The protein localises to the cytoplasm. It is found in the cytoskeleton. The protein resides in the microtubule organizing center. Its subcellular location is the centrosome. It localises to the chromosome. The protein localises to the centromere. It is found in the kinetochore. The protein resides in the spindle. Its subcellular location is the spindle pole. It localises to the golgi apparatus. The protein localises to the trans-Golgi network. It is found in the cell membrane. The protein resides in the cell projection. Its subcellular location is the ruffle membrane. It localises to the cell cortex. Functionally, microtubule plus-end tracking protein that promotes the stabilization of dynamic microtubules. Involved in the nucleation of noncentrosomal microtubules originating from the trans-Golgi network (TGN). Required for the polarization of the cytoplasmic microtubule arrays in migrating cells towards the leading edge of the cell. May act at the cell cortex to enhance the frequency of rescue of depolymerizing microtubules by attaching their plus-ends to cortical platforms composed of ERC1 and PHLDB2. This cortical microtubule stabilizing activity is regulated at least in part by phosphatidylinositol 3-kinase signaling. Also performs a similar stabilizing function at the kinetochore which is essential for the bipolar alignment of chromosomes on the mitotic spindle. Acts as a mediator of ERBB2-dependent stabilization of microtubules at the cell cortex. This chain is CLIP-associating protein 2 (Clasp2), found in Mus musculus (Mouse).